Consider the following 428-residue polypeptide: Enolase (428 aa).

A (2R)-2-phosphoglycerate-binding site is contributed by Q163. Catalysis depends on E205, which acts as the Proton donor. 3 residues coordinate Mg(2+): D242, E285, and D312. Positions 337, 366, 367, and 388 each coordinate (2R)-2-phosphoglycerate. K337 (proton acceptor) is an active-site residue.

This sequence belongs to the enolase family. Component of the RNA degradosome, a multiprotein complex involved in RNA processing and mRNA degradation. Mg(2+) serves as cofactor.

The protein localises to the cytoplasm. The protein resides in the secreted. It is found in the cell surface. The enzyme catalyses (2R)-2-phosphoglycerate = phosphoenolpyruvate + H2O. Its pathway is carbohydrate degradation; glycolysis; pyruvate from D-glyceraldehyde 3-phosphate: step 4/5. In terms of biological role, catalyzes the reversible conversion of 2-phosphoglycerate (2-PG) into phosphoenolpyruvate (PEP). It is essential for the degradation of carbohydrates via glycolysis. The chain is Enolase from Halorhodospira halophila (strain DSM 244 / SL1) (Ectothiorhodospira halophila (strain DSM 244 / SL1)).